Reading from the N-terminus, the 190-residue chain is MSQRTVTRRYAAALYEEANANGVLEAVDEDVRMLLESLDSNRPLVRVFESPVIPQDKKDSIVRELLGDRVEDLTVRFLRLLIRKDRETMTEAILDQYQTLRDEQRGIVDAEVTVARPLADETRTTLVGVLEEKTGKEIRLHLHEDADLIGGLVVRIGDRVFDASVRSQLGALHDRLREATLSENALDDGA.

The protein belongs to the ATPase delta chain family. In terms of assembly, F-type ATPases have 2 components, F(1) - the catalytic core - and F(0) - the membrane proton channel. F(1) has five subunits: alpha(3), beta(3), gamma(1), delta(1), epsilon(1). F(0) has three main subunits: a(1), b(2) and c(10-14). The alpha and beta chains form an alternating ring which encloses part of the gamma chain. F(1) is attached to F(0) by a central stalk formed by the gamma and epsilon chains, while a peripheral stalk is formed by the delta and b chains.

It is found in the cell inner membrane. F(1)F(0) ATP synthase produces ATP from ADP in the presence of a proton or sodium gradient. F-type ATPases consist of two structural domains, F(1) containing the extramembraneous catalytic core and F(0) containing the membrane proton channel, linked together by a central stalk and a peripheral stalk. During catalysis, ATP synthesis in the catalytic domain of F(1) is coupled via a rotary mechanism of the central stalk subunits to proton translocation. Functionally, this protein is part of the stalk that links CF(0) to CF(1). It either transmits conformational changes from CF(0) to CF(1) or is implicated in proton conduction. The chain is ATP synthase subunit delta from Salinibacter ruber (strain DSM 13855 / M31).